We begin with the raw amino-acid sequence, 483 residues long: Glutamyl-tRNA(Gln) amidotransferase subunit A (483 aa).

Catalysis depends on charge relay system residues Lys76 and Ser151. Ser175 functions as the Acyl-ester intermediate in the catalytic mechanism.

This sequence belongs to the amidase family. GatA subfamily. In terms of assembly, heterotrimer of A, B and C subunits.

The enzyme catalyses L-glutamyl-tRNA(Gln) + L-glutamine + ATP + H2O = L-glutaminyl-tRNA(Gln) + L-glutamate + ADP + phosphate + H(+). Allows the formation of correctly charged Gln-tRNA(Gln) through the transamidation of misacylated Glu-tRNA(Gln) in organisms which lack glutaminyl-tRNA synthetase. The reaction takes place in the presence of glutamine and ATP through an activated gamma-phospho-Glu-tRNA(Gln). This Pseudomonas putida (strain GB-1) protein is Glutamyl-tRNA(Gln) amidotransferase subunit A.